A 450-amino-acid polypeptide reads, in one-letter code: Asparagine--tRNA ligase (450 aa).

It belongs to the class-II aminoacyl-tRNA synthetase family. In terms of assembly, homodimer.

The protein localises to the cytoplasm. The enzyme catalyses tRNA(Asn) + L-asparagine + ATP = L-asparaginyl-tRNA(Asn) + AMP + diphosphate + H(+). The protein is Asparagine--tRNA ligase of Mycoplasmopsis pulmonis (strain UAB CTIP) (Mycoplasma pulmonis).